The chain runs to 170 residues: MORN repeat-containing protein 5 (170 aa).

3 MORN repeats span residues 8-30 (YFGE…TDTR), 31-53 (YIGE…SGSR), and 54-75 (FDAI…DGLQ).

As to expression, only detected in testis (at protein level).

It localises to the cell projection. It is found in the cilium. The protein localises to the flagellum. The protein is MORN repeat-containing protein 5 (Morn5) of Mus musculus (Mouse).